The following is a 384-amino-acid chain: NAD(P) transhydrogenase subunit alpha part 1 (384 aa).

Positions 126–136 are RQD loop; involved in interaction with PntB; the sequence is PRISRAQSMDI. NAD(+)-binding positions include 127-129, 132-135, 180-182, 202-204, glycine 234, glutamine 247, and leucine 266; these read RIS, QSMD, VGV, and DVR.

The protein belongs to the AlaDH/PNT family. Heterotrimer of two alpha chains and a beta (PntB) chain; in Rhodospirillum, the alpha chain is made of two subunits (PntAA and PntAB) and forms a dimer.

It carries out the reaction NAD(+) + NADPH + H(+)(in) = NADH + NADP(+) + H(+)(out). Functionally, the transhydrogenation between NADH and NADP is coupled to respiration and ATP hydrolysis and functions as a proton pump across the membrane. The protein is NAD(P) transhydrogenase subunit alpha part 1 (pntAA) of Rhodospirillum rubrum (strain ATCC 11170 / ATH 1.1.1 / DSM 467 / LMG 4362 / NCIMB 8255 / S1).